Consider the following 731-residue polypeptide: Replication restart protein PriA (731 aa).

The tract at residues 1 to 98 is 3'BD; sequence MSVAHVALPV…HPIGDVLFHA (98 aa). The WH stretch occupies residues 115–177; the sequence is WYWFATEQGQ…RGKGLAELAC (63 aa). The segment at 200-375 is helicase lobe 1; sequence TEQATAVGAI…VRQGKYRQLT (176 aa). The Helicase ATP-binding domain maps to 210–376; the sequence is HSAADRFSAW…RQGKYRQLTL (167 aa). 223–230 provides a ligand contact to ATP; the sequence is GITGSGKT. ADP contacts are provided by G226, G228, K229, T230, E231, and R263. Positions 319–322 match the DEAH box motif; the sequence is DEEH. The short motif at 326–340 is the Aromatic-rich loop (ARL) element; sequence YKQQEGWRYHARDLA. Residues 387–430 are helicase lobe 2, N-terminus; sequence QQHVLDLKGQPLQAGLSPALISRMRQHLQADNQVILFLNRRGFA. Residues 431–485 are CRR; it reads PALLCHDCGWIAECPRCDSYYTLHQAQHHLRCHHCDSQRPIPRQCPSCGSTHLVP. The Zn(2+) site is built by C435, C438, C444, C447, C462, C465, C475, and C478. One can recognise a Helicase C-terminal domain in the interval 470 to 637; the sequence is PIPRQCPSCG…QLPPWTSHVL (168 aa). The tract at residues 486–626 is helicase lobe 2, C-terminus; it reads VGIGTEQLEQ…AEQALAERQT (141 aa). K543 lines the ADP pocket. Positions 633-731 are CTD; it reads TSHVLIRAED…WVLDVDPIEG (99 aa).

Belongs to the helicase family. PriA subfamily. Binds SSB. Component of the replication restart primosome. The cofactor is Zn(2+).

The enzyme catalyses Couples ATP hydrolysis with the unwinding of duplex DNA by translocating in the 3'-5' direction.. It catalyses the reaction ATP + H2O = ADP + phosphate + H(+). ATPase activity is stimulated by single-stranded binding protein (SSB). Functionally, initiates the restart of stalled replication forks, which reloads the replicative helicase on sites other than the origin of replication. Recognizes and binds to abandoned replication forks and remodels them to uncover a helicase loading site. Promotes assembly of the primosome at these replication forks. Recognizes abandoned replication forks and remodels SSB on ssDNA to uncover a loading site for DnaB. Binds replication fork DNA, has DNA-dependent ATPase activity in the presence of replication fork DNA, restores normal cell growth and SOS induction to E.coli mutant pirA304. The sequence is that of Replication restart protein PriA from Klebsiella pneumoniae subsp. pneumoniae (strain ATCC 700721 / MGH 78578).